We begin with the raw amino-acid sequence, 503 residues long: Xylan O-acetyltransferase 12 (503 aa).

Topologically, residues 1–54 (MWSALFSHLREVHKRSGVKEEKLIMKSPAAAGEAAGCHKPQATATNKMTVLQSP) are cytoplasmic. The helical; Signal-anchor for type II membrane protein transmembrane segment at 55–77 (LGLRTILTSLVAFFIVVSSVSLL) threads the bilayer. Residues 78 to 503 (FDRSQDAQAQ…EFLYAYLMHK (426 aa)) lie on the Lumenal side of the membrane. Disulfide bonds link cysteine 153–cysteine 204, cysteine 175–cysteine 240, cysteine 184–cysteine 484, and cysteine 400–cysteine 480. 4 N-linked (GlcNAc...) asparagine glycosylation sites follow: asparagine 154, asparagine 164, asparagine 190, and asparagine 210. The GDS motif signature appears at 227–229 (GDS). Serine 229 (nucleophile) is an active-site residue. N-linked (GlcNAc...) asparagine glycans are attached at residues asparagine 256, asparagine 268, asparagine 373, asparagine 402, and asparagine 443. Aspartate 479 acts as the Proton donor in catalysis. Residues 479–482 (DCTH) carry the DXXH motif motif. Histidine 482 functions as the Proton acceptor in the catalytic mechanism.

Belongs to the PC-esterase family. TBL subfamily.

The protein resides in the golgi apparatus membrane. Functionally, xylan acetyltransferase required for 2-O- and 3-O-monoacetylation of xylosyl residues in xylan. Catalyzes the 2-O-acetylation of xylan, followed by nonenzymatic acetyl migration to the O-3 position, resulting in products that are monoacetylated at both O-2 and O-3 positions. The chain is Xylan O-acetyltransferase 12 from Oryza sativa subsp. japonica (Rice).